The chain runs to 355 residues: Probable low-specificity L-threonine aldolase 2 (355 aa).

Position 211 is an N6-(pyridoxal phosphate)lysine (Lys-211).

This sequence belongs to the threonine aldolase family. Pyridoxal 5'-phosphate is required as a cofactor. Expressed in roots, leaf vasculature and flowers.

It carries out the reaction L-threonine = acetaldehyde + glycine. The enzyme catalyses L-allo-threonine = acetaldehyde + glycine. Its pathway is amino-acid degradation; L-threonine degradation via aldolase pathway; acetaldehyde and glycine from L-threonine: step 1/1. Functionally, threonine aldolase involved in threonine degradation to glycine. May play a role in the removal of L-allo-threonine. The chain is Probable low-specificity L-threonine aldolase 2 (THA2) from Arabidopsis thaliana (Mouse-ear cress).